The sequence spans 190 residues: Jupiter microtubule associated homolog 2 (190 aa).

Residue methionine 1 is modified to N-acetylmethionine. Positions 1-15 are enriched in polar residues; the sequence is MFQGADSQAGKSGSR. A disordered region spans residues 1–190; that stretch reads MFQGADSQAG…PGGKSSLSFY (190 aa). N6-acetyllysine is present on lysine 11. Serine 30 is subject to Phosphoserine. Residues 35–44 are compositionally biased toward polar residues; that stretch reads ISSSKPNRMA. Phosphoserine is present on residues serine 45, serine 69, and serine 97. 2 stretches are compositionally biased toward basic and acidic residues: residues 110–129 and 138–153; these read KPKD…DLKA and EQSD…HAKI. Position 144 is a phosphoserine (serine 144).

This sequence belongs to the JUPITER family. As to quaternary structure, monomer. Dimer. Interacts with TPCN1.

Its subcellular location is the cytoplasm. It is found in the nucleus. In terms of biological role, nicotinic acid adenine dinucleotide phosphate (NAADP) binding protein required for NAADP-evoked intracellular calcium release. Confers NAADP-sensitivity to the two pore channels (TPCs) complex. Enables NAADP to activate Ca(2+) release from the endoplasmic reticulum through ryanodine receptors. The sequence is that of Jupiter microtubule associated homolog 2 from Mus musculus (Mouse).